Here is a 607-residue protein sequence, read N- to C-terminus: Elongation factor 4 (607 aa).

The tr-type G domain occupies 11-193 (EKIRNFSIIA…QIVEKVPAPQ (183 aa)). Residues 23–28 (DHGKST) and 140–143 (NKID) contribute to the GTP site.

It belongs to the TRAFAC class translation factor GTPase superfamily. Classic translation factor GTPase family. LepA subfamily.

The protein resides in the cell membrane. It catalyses the reaction GTP + H2O = GDP + phosphate + H(+). In terms of biological role, required for accurate and efficient protein synthesis under certain stress conditions. May act as a fidelity factor of the translation reaction, by catalyzing a one-codon backward translocation of tRNAs on improperly translocated ribosomes. Back-translocation proceeds from a post-translocation (POST) complex to a pre-translocation (PRE) complex, thus giving elongation factor G a second chance to translocate the tRNAs correctly. Binds to ribosomes in a GTP-dependent manner. The chain is Elongation factor 4 from Lactococcus lactis subsp. cremoris (strain SK11).